A 391-amino-acid polypeptide reads, in one-letter code: NADH-quinone oxidoreductase subunit D (391 aa).

The protein belongs to the complex I 49 kDa subunit family. As to quaternary structure, NDH-1 is composed of 14 different subunits. Subunits NuoB, C, D, E, F, and G constitute the peripheral sector of the complex.

Its subcellular location is the cell inner membrane. The catalysed reaction is a quinone + NADH + 5 H(+)(in) = a quinol + NAD(+) + 4 H(+)(out). Functionally, NDH-1 shuttles electrons from NADH, via FMN and iron-sulfur (Fe-S) centers, to quinones in the respiratory chain. The immediate electron acceptor for the enzyme in this species is believed to be ubiquinone. Couples the redox reaction to proton translocation (for every two electrons transferred, four hydrogen ions are translocated across the cytoplasmic membrane), and thus conserves the redox energy in a proton gradient. The chain is NADH-quinone oxidoreductase subunit D from Rickettsia massiliae (strain Mtu5).